A 440-amino-acid chain; its full sequence is Chromosome partition protein MukF (440 aa).

The tract at residues 208 to 236 (LSETSGTLRELQDTLEAAGDKLQANLLRI) is leucine-zipper.

The protein belongs to the MukF family. As to quaternary structure, interacts, and probably forms a ternary complex, with MukE and MukB via its C-terminal region. The complex formation is stimulated by calcium or magnesium. It is required for an interaction between MukE and MukB.

The protein localises to the cytoplasm. It localises to the nucleoid. Its function is as follows. Involved in chromosome condensation, segregation and cell cycle progression. May participate in facilitating chromosome segregation by condensation DNA from both sides of a centrally located replisome during cell division. Not required for mini-F plasmid partitioning. Probably acts via its interaction with MukB and MukE. Overexpression results in anucleate cells. It has a calcium binding activity. The chain is Chromosome partition protein MukF from Edwardsiella ictaluri (strain 93-146).